Reading from the N-terminus, the 433-residue chain is Tol-Pal system protein TolB (433 aa).

An N-terminal signal peptide occupies residues 1–26; it reads MSLMTKLGFRALVASCLIAAGGAAHA.

This sequence belongs to the TolB family. In terms of assembly, the Tol-Pal system is composed of five core proteins: the inner membrane proteins TolA, TolQ and TolR, the periplasmic protein TolB and the outer membrane protein Pal. They form a network linking the inner and outer membranes and the peptidoglycan layer.

The protein resides in the periplasm. In terms of biological role, part of the Tol-Pal system, which plays a role in outer membrane invagination during cell division and is important for maintaining outer membrane integrity. In Burkholderia thailandensis (strain ATCC 700388 / DSM 13276 / CCUG 48851 / CIP 106301 / E264), this protein is Tol-Pal system protein TolB.